Reading from the N-terminus, the 195-residue chain is MRLRFSVPLFFFGCVFVHGVFAGPFPPPGMSLPEYWGEEHVWWDGRATFHGEVVRPACTLAMEDAWQIIDMGETPVRDLQNGFSGPERKFSLRLRNCEFNSQGGNLFSDSRIRVTFDGVRGETPDKFNLSGQAKGINLQIADARGNIARAGKVMPAIPLTGNEEALDYTLRIVRNGKKLEAGNYFAVLGFRVDYE.

Positions 1-22 (MRLRFSVPLFFFGCVFVHGVFA) are cleaved as a signal peptide. Cys58 and Cys97 are disulfide-bonded.

This sequence belongs to the fimbrial protein family.

It localises to the secreted. It is found in the fimbrium. In terms of biological role, fimbriae (also called pili), polar filaments radiating from the surface of the bacterium to a length of 0.5-1.5 micrometers and numbering 100-300 per cell, enable bacteria to colonize the epithelium of specific host organs. Seems to anchor the pilus to the bacterial cell. In addition the stoichiometric relationship between PrsH and PrsA determines the pilus length. This Escherichia coli protein is PRS fimbrial minor pilin protein (prsH).